The primary structure comprises 383 residues: Thioredoxin reductase 2 (383 aa).

Residues 66 to 69, 87 to 88, 95 to 100, Asn109, Val142, Cys200, Asp345, and 352 to 354 each bind FAD; these read SGPA, FE, IAPGGQ, and RQA. An intrachain disulfide couples Cys197 to Cys200.

This sequence belongs to the class-II pyridine nucleotide-disulfide oxidoreductase family. Homodimer. The cofactor is FAD.

Its subcellular location is the cytoplasm. The protein localises to the mitochondrion matrix. It carries out the reaction [thioredoxin]-dithiol + NADP(+) = [thioredoxin]-disulfide + NADPH + H(+). Functionally, possesses thioredoxin-disulfide reductase activity towards thioredoxins O1, O2 and F3. The polypeptide is Thioredoxin reductase 2 (NTR2) (Arabidopsis thaliana (Mouse-ear cress)).